The sequence spans 329 residues: U5 small nuclear ribonucleoprotein TSSC4 (329 aa).

Disordered stretches follow at residues 1–88 (MAEA…MSST) and 104–156 (ARRA…PDYV). Residues 22–41 (DTLPSDTVSLSDSDSDLSLP) are compositionally biased toward low complexity. Phosphoserine occurs at positions 60, 67, 86, 132, 143, and 146. The segment at 77-104 (VQPFHLRGMSSTFSQRSRDIFDCLEGAA) is hom2; mediates interaction with the U5 snRNP complexes and required for spliceosomal tri-snRNP complex assembly. An interaction with SNRNP200 region spans residues 149-316 (VPPVPDYVAH…SRKRSRDHFR (168 aa)). A hom3; mediates interaction with the U5 snRNP complexes region spans residues 150-186 (PPVPDYVAHPERWTKYSLEDVTEVSEQSNQATALAFL). The interval 201–250 (FNQDPSSCGEGRVIFTKPVRGVEARHERKRVLGKVGEPGRGGLGNPATDR) is hom4; necessary for interaction with the PRPF19 complex and required for spliceosomal tri-snRNP complex assembly. Lys217 is subject to N6-acetyllysine. The segment at 221 to 329 (GVEARHERKR…SSPEDPGAEV (109 aa)) is disordered. A Phosphoserine modification is found at Ser265. Residues 306-317 (GSRKRSRDHFRN) show a composition bias toward basic residues. Ser321 carries the post-translational modification Phosphoserine.

It belongs to the TSSC4 family. In terms of assembly, interacts in a RNA-independent manner with distinct U5 snRNP-containing complexes, the mono-U5 snRNP and the post-splicing U5 snRNP-PRPF19 complex. Interacts with SNRNP200; the interaction is direct, excludes recruitment of C9ORF78 and WBP4 to SNRNP200 and negatively regulates its RNA helicase activity. Interacts with PRPF8; the interaction is direct. As to expression, expressed in fetal brain, lung, liver and kidney. Widely expressed in adult tissues.

The protein resides in the nucleus. The protein localises to the cytoplasm. In terms of biological role, protein associated with the U5 snRNP, during its maturation and its post-splicing recycling and which is required for spliceosomal tri-snRNP complex assembly in the nucleus. Has a molecular sequestering activity and transiently hinders SNRNP200 binding sites for constitutive splicing factors that intervene later during the assembly of the spliceosome and splicing. Together with its molecular sequestering activity, may also function as a molecular adapter and placeholder, coordinating the assembly of the U5 snRNP and its association with the U4/U6 di-snRNP. The polypeptide is U5 small nuclear ribonucleoprotein TSSC4 (Homo sapiens (Human)).